A 486-amino-acid polypeptide reads, in one-letter code: Ribulose bisphosphate carboxylase large chain (486 aa).

The substrate site is built by asparagine 126 and threonine 176. The active-site Proton acceptor is the lysine 178. Residue lysine 180 coordinates substrate. The Mg(2+) site is built by lysine 204, aspartate 206, and glutamate 207. Lysine 204 is subject to N6-carboxylysine. The active-site Proton acceptor is histidine 296. Substrate contacts are provided by arginine 297, histidine 329, and serine 381.

The protein belongs to the RuBisCO large chain family. Type I subfamily. As to quaternary structure, heterohexadecamer of 8 large chains and 8 small chains. Requires Mg(2+) as cofactor.

It catalyses the reaction 2 (2R)-3-phosphoglycerate + 2 H(+) = D-ribulose 1,5-bisphosphate + CO2 + H2O. The enzyme catalyses D-ribulose 1,5-bisphosphate + O2 = 2-phosphoglycolate + (2R)-3-phosphoglycerate + 2 H(+). Its function is as follows. RuBisCO catalyzes two reactions: the carboxylation of D-ribulose 1,5-bisphosphate, the primary event in carbon dioxide fixation, as well as the oxidative fragmentation of the pentose substrate. Both reactions occur simultaneously and in competition at the same active site. In Rhizobium meliloti (strain 1021) (Ensifer meliloti), this protein is Ribulose bisphosphate carboxylase large chain.